Reading from the N-terminus, the 165-residue chain is uncharacterized protein (165 aa).

The region spanning 8–159 is the N-acetyltransferase domain; it reads LLVNYKTLEE…QGVQEQTTKP (152 aa).

This is an uncharacterized protein from Shouchella clausii (strain KSM-K16) (Alkalihalobacillus clausii).